We begin with the raw amino-acid sequence, 281 residues long: Large ribosomal subunit protein mL46 (281 aa).

The transit peptide at 1–19 (MKVNLMLKRGLATATATAS) directs the protein to the mitochondrion. Basic and acidic residues predominate over residues 106 to 118 (RERSTKQEVKLSD). The segment at 106–141 (RERSTKQEVKLSDDSTVAFSNNQKEQSKDDVNRPVI) is disordered. The span at 119 to 129 (DSTVAFSNNQK) shows a compositional bias: polar residues.

Belongs to the mitochondrion-specific ribosomal protein mL46 family. As to quaternary structure, component of the mitochondrial large ribosomal subunit (mt-LSU). Mature yeast 74S mitochondrial ribosomes consist of a small (37S) and a large (54S) subunit. The 37S small subunit contains a 15S ribosomal RNA (15S mt-rRNA) and 34 different proteins. The 54S large subunit contains a 21S rRNA (21S mt-rRNA) and 46 different proteins.

The protein resides in the mitochondrion. Component of the mitochondrial ribosome (mitoribosome), a dedicated translation machinery responsible for the synthesis of mitochondrial genome-encoded proteins, including at least some of the essential transmembrane subunits of the mitochondrial respiratory chain. The mitoribosomes are attached to the mitochondrial inner membrane and translation products are cotranslationally integrated into the membrane. This chain is Large ribosomal subunit protein mL46 (MRPL17), found in Saccharomyces cerevisiae (strain ATCC 204508 / S288c) (Baker's yeast).